The primary structure comprises 65 residues: Small ribosomal subunit protein bS21 (65 aa).

Residues D44–S65 form a disordered region. Over residues K48–Q57 the composition is skewed to basic residues.

The protein belongs to the bacterial ribosomal protein bS21 family.

This Prosthecochloris aestuarii (strain DSM 271 / SK 413) protein is Small ribosomal subunit protein bS21.